The sequence spans 264 residues: 3'-5' ssDNA/RNA exonuclease TatD (264 aa).

A divalent metal cation contacts are provided by glutamate 92, histidine 128, and histidine 153.

This sequence belongs to the metallo-dependent hydrolases superfamily. TatD-type hydrolase family. TatD subfamily. Monomer. The cofactor is Mg(2+).

The protein localises to the cytoplasm. In terms of biological role, 3'-5' exonuclease that prefers single-stranded DNA and RNA. May play a role in the H(2)O(2)-induced DNA damage repair. This chain is 3'-5' ssDNA/RNA exonuclease TatD, found in Dickeya dadantii (strain 3937) (Erwinia chrysanthemi (strain 3937)).